Consider the following 706-residue polypeptide: Glycine--tRNA ligase beta subunit (706 aa).

It belongs to the class-II aminoacyl-tRNA synthetase family. In terms of assembly, tetramer of two alpha and two beta subunits.

The protein localises to the cytoplasm. The enzyme catalyses tRNA(Gly) + glycine + ATP = glycyl-tRNA(Gly) + AMP + diphosphate. This Hyphomonas neptunium (strain ATCC 15444) protein is Glycine--tRNA ligase beta subunit.